Here is a 497-residue protein sequence, read N- to C-terminus: NAD(P)H-quinone oxidoreductase chain 4, chloroplastic (497 aa).

13 helical membrane-spanning segments follow: residues leucine 4 to phenylalanine 24, tyrosine 35 to phenylalanine 55, methionine 87 to valine 107, leucine 113 to aspartate 133, isoleucine 134 to isoleucine 154, phenylalanine 167 to leucine 187, isoleucine 207 to isoleucine 227, histidine 242 to isoleucine 262, alanine 274 to isoleucine 294, methionine 313 to leucine 333, leucine 386 to isoleucine 406, isoleucine 416 to methionine 436, and isoleucine 462 to valine 482.

It belongs to the complex I subunit 4 family.

The protein localises to the plastid. It localises to the chloroplast thylakoid membrane. It catalyses the reaction a plastoquinone + NADH + (n+1) H(+)(in) = a plastoquinol + NAD(+) + n H(+)(out). The catalysed reaction is a plastoquinone + NADPH + (n+1) H(+)(in) = a plastoquinol + NADP(+) + n H(+)(out). This chain is NAD(P)H-quinone oxidoreductase chain 4, chloroplastic, found in Angiopteris evecta (Mule's foot fern).